A 557-amino-acid polypeptide reads, in one-letter code: Glucose-6-phosphate isomerase (557 aa).

E359 serves as the catalytic Proton donor. Active-site residues include H390 and K518.

It belongs to the GPI family.

Its subcellular location is the cytoplasm. The catalysed reaction is alpha-D-glucose 6-phosphate = beta-D-fructose 6-phosphate. The protein operates within carbohydrate biosynthesis; gluconeogenesis. Its pathway is carbohydrate degradation; glycolysis; D-glyceraldehyde 3-phosphate and glycerone phosphate from D-glucose: step 2/4. Functionally, catalyzes the reversible isomerization of glucose-6-phosphate to fructose-6-phosphate. This is Glucose-6-phosphate isomerase from Hahella chejuensis (strain KCTC 2396).